The primary structure comprises 198 residues: dTTP/UTP pyrophosphatase (198 aa).

Aspartate 76 serves as the catalytic Proton acceptor.

It belongs to the Maf family. YhdE subfamily. Requires a divalent metal cation as cofactor.

Its subcellular location is the cytoplasm. The catalysed reaction is dTTP + H2O = dTMP + diphosphate + H(+). It carries out the reaction UTP + H2O = UMP + diphosphate + H(+). Functionally, nucleoside triphosphate pyrophosphatase that hydrolyzes dTTP and UTP. May have a dual role in cell division arrest and in preventing the incorporation of modified nucleotides into cellular nucleic acids. In Shewanella denitrificans (strain OS217 / ATCC BAA-1090 / DSM 15013), this protein is dTTP/UTP pyrophosphatase.